We begin with the raw amino-acid sequence, 387 residues long: Formate-dependent phosphoribosylglycinamide formyltransferase (387 aa).

Residues 12 to 13 and Glu72 contribute to the N(1)-(5-phospho-beta-D-ribosyl)glycinamide site; that span reads EL. ATP is bound by residues Arg104, Lys145, 150–155, 185–188, and Glu193; these read SSGKGQ and EEFI. Positions 109-300 constitute an ATP-grasp domain; that stretch reads DLAAKDLKLL…EFELHIRAIL (192 aa). Residues Glu258 and Glu270 each contribute to the Mg(2+) site. Residues Asp277, Lys348, and 355–356 each bind N(1)-(5-phospho-beta-D-ribosyl)glycinamide; that span reads RR.

It belongs to the PurK/PurT family. Homodimer.

It catalyses the reaction N(1)-(5-phospho-beta-D-ribosyl)glycinamide + formate + ATP = N(2)-formyl-N(1)-(5-phospho-beta-D-ribosyl)glycinamide + ADP + phosphate + H(+). It participates in purine metabolism; IMP biosynthesis via de novo pathway; N(2)-formyl-N(1)-(5-phospho-D-ribosyl)glycinamide from N(1)-(5-phospho-D-ribosyl)glycinamide (formate route): step 1/1. Its function is as follows. Involved in the de novo purine biosynthesis. Catalyzes the transfer of formate to 5-phospho-ribosyl-glycinamide (GAR), producing 5-phospho-ribosyl-N-formylglycinamide (FGAR). Formate is provided by PurU via hydrolysis of 10-formyl-tetrahydrofolate. The sequence is that of Formate-dependent phosphoribosylglycinamide formyltransferase from Leptospira borgpetersenii serovar Hardjo-bovis (strain JB197).